Consider the following 284-residue polypeptide: Bifunctional protein FolD (284 aa).

NADP(+) contacts are provided by residues 166-168 and Ile232; that span reads GAS.

It belongs to the tetrahydrofolate dehydrogenase/cyclohydrolase family. In terms of assembly, homodimer.

It carries out the reaction (6R)-5,10-methylene-5,6,7,8-tetrahydrofolate + NADP(+) = (6R)-5,10-methenyltetrahydrofolate + NADPH. It catalyses the reaction (6R)-5,10-methenyltetrahydrofolate + H2O = (6R)-10-formyltetrahydrofolate + H(+). It functions in the pathway one-carbon metabolism; tetrahydrofolate interconversion. Its function is as follows. Catalyzes the oxidation of 5,10-methylenetetrahydrofolate to 5,10-methenyltetrahydrofolate and then the hydrolysis of 5,10-methenyltetrahydrofolate to 10-formyltetrahydrofolate. The polypeptide is Bifunctional protein FolD (Shewanella baltica (strain OS223)).